A 61-amino-acid chain; its full sequence is Putative antitoxin VapB13 (61 aa).

Belongs to the UPF0165 family.

Possibly the antitoxin component of a type II toxin-antitoxin (TA) system. Its cognate toxin is VapC13 (Potential). The protein is Putative antitoxin VapB13 (vapB13) of Archaeoglobus fulgidus (strain ATCC 49558 / DSM 4304 / JCM 9628 / NBRC 100126 / VC-16).